Reading from the N-terminus, the 458-residue chain is ATP synthase subunit beta (458 aa).

147–154 contacts ATP; that stretch reads GGAGVGKT.

It belongs to the ATPase alpha/beta chains family. As to quaternary structure, F-type ATPases have 2 components, CF(1) - the catalytic core - and CF(0) - the membrane proton channel. CF(1) has five subunits: alpha(3), beta(3), gamma(1), delta(1), epsilon(1). CF(0) has three main subunits: a(1), b(2) and c(9-12). The alpha and beta chains form an alternating ring which encloses part of the gamma chain. CF(1) is attached to CF(0) by a central stalk formed by the gamma and epsilon chains, while a peripheral stalk is formed by the delta and b chains.

The protein localises to the cell inner membrane. It carries out the reaction ATP + H2O + 4 H(+)(in) = ADP + phosphate + 5 H(+)(out). In terms of biological role, produces ATP from ADP in the presence of a proton gradient across the membrane. The catalytic sites are hosted primarily by the beta subunits. The chain is ATP synthase subunit beta from Chromohalobacter salexigens (strain ATCC BAA-138 / DSM 3043 / CIP 106854 / NCIMB 13768 / 1H11).